We begin with the raw amino-acid sequence, 431 residues long: Trigger factor (431 aa).

Residues 158 to 243 form the PPIase FKBP-type domain; sequence GDLVAVETWS…VAEVSEPVVP (86 aa).

The protein belongs to the FKBP-type PPIase family. Tig subfamily.

It localises to the cytoplasm. The enzyme catalyses [protein]-peptidylproline (omega=180) = [protein]-peptidylproline (omega=0). Its function is as follows. Involved in protein export. Acts as a chaperone by maintaining the newly synthesized protein in an open conformation. Functions as a peptidyl-prolyl cis-trans isomerase. This is Trigger factor from Stenotrophomonas maltophilia (strain K279a).